The following is a 321-amino-acid chain: GTP 3',8-cyclase (321 aa).

The region spanning Ser-5 to Glu-233 is the Radical SAM core domain. Position 14 (Arg-14) interacts with GTP. Positions 21 and 25 each coordinate [4Fe-4S] cluster. Tyr-27 serves as a coordination point for S-adenosyl-L-methionine. A [4Fe-4S] cluster-binding site is contributed by Cys-28. Arg-64 lines the GTP pocket. An S-adenosyl-L-methionine-binding site is contributed by Gly-68. Ser-95 is a GTP binding site. Residue Ser-119 coordinates S-adenosyl-L-methionine. Lys-155 is a GTP binding site. Residue Met-189 coordinates S-adenosyl-L-methionine. Residues Cys-249 and Cys-252 each coordinate [4Fe-4S] cluster. Arg-254 to Arg-256 is a binding site for GTP. A [4Fe-4S] cluster-binding site is contributed by Cys-266.

Belongs to the radical SAM superfamily. MoaA family. In terms of assembly, monomer and homodimer. The cofactor is [4Fe-4S] cluster.

It catalyses the reaction GTP + AH2 + S-adenosyl-L-methionine = (8S)-3',8-cyclo-7,8-dihydroguanosine 5'-triphosphate + 5'-deoxyadenosine + L-methionine + A + H(+). The protein operates within cofactor biosynthesis; molybdopterin biosynthesis. Catalyzes the cyclization of GTP to (8S)-3',8-cyclo-7,8-dihydroguanosine 5'-triphosphate. The polypeptide is GTP 3',8-cyclase (Helicobacter pylori (strain HPAG1)).